The sequence spans 493 residues: Cytochrome P450 monooxygenase mfmF (493 aa).

A run of 2 helical transmembrane segments spans residues 3–23 and 301–321; these read SLIP…RLFF and VLFA…FHLV. Residue cysteine 440 participates in heme binding.

The protein belongs to the cytochrome P450 family. Heme serves as cofactor.

It localises to the membrane. The protein operates within secondary metabolite biosynthesis; terpenoid biosynthesis. Functionally, cytochrome P450 monooxygenase; part of the gene cluster that mediates the biosynthesis of the phthalide-terpenoid hybrid 11'-O-desmethylfendlerol. Within the pathway, mfmF catalyzes C-3 hydroxylation of 5-hydroxy-4-(hydroxymethyl)-7-methoxy-6-methylphthalide to yield cyclopolic acid. The biosynthesis of 11'-O-desmethylfendlerol begins with the NR-PKS mfmB that forms 3,5-dimethylorsellinic acid (DMOA), which is then transformed into the phthalide 5,7-dihydroxy-4-(hydroxymethyl)-6-methylphthalide by the cytochrome P450 monooxygenase mfmA and the hydrolase mfmC. Subsequently, the methyltransferase mfmE catalyzes 7-O-methylation to yield 5-hydroxy-4-(hydroxymethyl)-7-methoxy-6-methylphthalide, which undergoes C-3 hydroxylation by the cytochrome P450 monooxygenase mfmF. The resultant cyclopolic acid (2,5-dihydroxy-4-(hydroxymethyl)-7-methoxy-6-methylphthalide) is then farnesylated by the DMATS-type prenyltransferase mfmD to afford 5-O-farnesylcyclopolic acid. Finally, the Pyr4-family terpene cyclase mfmH cyclizes the farnesyl moiety of 5-O-farnesylcyclopolic acid into a drimane-like structure, thus completing the biosynthesis of 11'-O-desmethylfendlerol. This chain is Cytochrome P450 monooxygenase mfmF, found in Annulohypoxylon moriforme (Filamentous fungus).